The following is a 495-amino-acid chain: Glycerol kinase (495 aa).

ADP is bound at residue Thr-14. 3 residues coordinate ATP: Thr-14, Thr-15, and Ser-16. Residue Thr-14 participates in sn-glycerol 3-phosphate binding. Arg-18 lines the ADP pocket. Arg-84, Glu-85, Tyr-136, and Asp-246 together coordinate sn-glycerol 3-phosphate. The glycerol site is built by Arg-84, Glu-85, Tyr-136, Asp-246, and Gln-247. ADP-binding residues include Thr-268 and Gly-312. Residues Thr-268, Gly-312, Gln-316, and Gly-413 each contribute to the ATP site. The ADP site is built by Gly-413 and Asn-417.

The protein belongs to the FGGY kinase family.

The enzyme catalyses glycerol + ATP = sn-glycerol 3-phosphate + ADP + H(+). It functions in the pathway polyol metabolism; glycerol degradation via glycerol kinase pathway; sn-glycerol 3-phosphate from glycerol: step 1/1. Its activity is regulated as follows. Inhibited by fructose 1,6-bisphosphate (FBP). In terms of biological role, key enzyme in the regulation of glycerol uptake and metabolism. Catalyzes the phosphorylation of glycerol to yield sn-glycerol 3-phosphate. This chain is Glycerol kinase, found in Bdellovibrio bacteriovorus (strain ATCC 15356 / DSM 50701 / NCIMB 9529 / HD100).